Here is a 176-residue protein sequence, read N- to C-terminus: ATP-dependent protease subunit HslV (176 aa).

Threonine 5 is a catalytic residue. Na(+) is bound by residues serine 161, cysteine 164, and threonine 167.

The protein belongs to the peptidase T1B family. HslV subfamily. A double ring-shaped homohexamer of HslV is capped on each side by a ring-shaped HslU homohexamer. The assembly of the HslU/HslV complex is dependent on binding of ATP.

The protein resides in the cytoplasm. The enzyme catalyses ATP-dependent cleavage of peptide bonds with broad specificity.. With respect to regulation, allosterically activated by HslU binding. Functionally, protease subunit of a proteasome-like degradation complex believed to be a general protein degrading machinery. This chain is ATP-dependent protease subunit HslV, found in Caldanaerobacter subterraneus subsp. tengcongensis (strain DSM 15242 / JCM 11007 / NBRC 100824 / MB4) (Thermoanaerobacter tengcongensis).